Reading from the N-terminus, the 82-residue chain is Exodeoxyribonuclease 7 small subunit (82 aa).

Belongs to the XseB family. In terms of assembly, heterooligomer composed of large and small subunits.

It localises to the cytoplasm. It catalyses the reaction Exonucleolytic cleavage in either 5'- to 3'- or 3'- to 5'-direction to yield nucleoside 5'-phosphates.. In terms of biological role, bidirectionally degrades single-stranded DNA into large acid-insoluble oligonucleotides, which are then degraded further into small acid-soluble oligonucleotides. The polypeptide is Exodeoxyribonuclease 7 small subunit (Sodalis glossinidius (strain morsitans)).